Consider the following 161-residue polypeptide: Cell wall protein YLR042C (161 aa).

Residues M1 to A24 form the signal peptide. N77, N104, and N120 each carry an N-linked (GlcNAc...) asparagine glycan. Residues F111 to G139 form a disordered region. A compositionally biased stretch (low complexity) spans K123–T137. Residue G139 is the site of GPI-anchor amidated glycine attachment. The propeptide at V140–S161 is removed in mature form.

Post-translationally, the GPI-anchor is attached to the protein in the endoplasmic reticulum and serves to target the protein to the cell surface. There, the glucosamine-inositol phospholipid moiety is cleaved off and the GPI-modified mannoprotein is covalently attached via its lipidless GPI glycan remnant to the 1,6-beta-glucan of the outer cell wall layer.

It localises to the secreted. Its subcellular location is the cell wall. It is found in the membrane. This Saccharomyces cerevisiae (strain ATCC 204508 / S288c) (Baker's yeast) protein is Cell wall protein YLR042C.